The sequence spans 2480 residues: Polyprotein P1234 (2480 aa).

The Alphavirus-like MT domain occupies 27-257 (ESQQVTPNDH…ESRRLLKSWH (231 aa)). The interval 242–261 (GXTLYIESRRLLKSWHLPSV) is nsP1 membrane-binding. S-palmitoyl cysteine; by host attachment occurs at residues cysteine 415 and cysteine 417. Residues 480–506 (YSGDRNEAREAEKEAEETKEAELTREA) are disordered. Positions 483–504 (DRNEAREAEKEAEETKEAELTR) are enriched in basic and acidic residues. The region spanning 688–840 (DLINPPFHEF…HDICTQVLHK (153 aa)) is the (+)RNA virus helicase ATP-binding domain. 719-726 (GVPGSGKS) is a binding site for a ribonucleoside 5'-triphosphate. In terms of domain architecture, (+)RNA virus helicase C-terminal spans 841–989 (SISRRCTLPI…LEEWQEEHDN (149 aa)). A Peptidase C9 domain is found at 1002-1324 (DPFQNKAKVC…QRLSSMFACN (323 aa)). Residues 1003-1022 (PFQNKAKVCWAKCLVQVLET) form a nucleolus localization signal region. Cysteine 1011 acts as the For cysteine protease nsP2 activity in catalysis. Positions 1055-1064 (TKYYGVDLDS) match the Nuclear export signal motif. Histidine 1080 functions as the For cysteine protease nsP2 activity in the catalytic mechanism. Positions 1179–1183 (PHKRV) match the Nuclear localization signal motif. One can recognise a Macro domain in the interval 1332–1491 (APSYRVRRTD…KIQEAIDRRT (160 aa)). Aspartate 1341, asparagine 1355, glycine 1363, glycine 1443, valine 1444, and phenylalanine 1445 together coordinate ADP-D-ribose. Residues cysteine 1593, cysteine 1595, cysteine 1618, and cysteine 1636 each coordinate Zn(2+). Residue threonine 1675 is modified to Phosphothreonine; by host. 2 consecutive short sequence motifs (FGDF; binding to host G3BP1) follow at residues 1843–1846 (FGDF) and 1854–1857 (FGDI). One can recognise a RdRp catalytic domain in the interval 2234 to 2349 (DAVLETDIAS…HGVRSDPLMA (116 aa)).

In terms of assembly, interacts with non-structural protein 3. Interacts with RNA-directed RNA polymerase nsP4. Interacts with protease nsP2. interacts with itself. As to quaternary structure, interacts with mRNA-capping enzyme nsP1. Interacts with host DDX1. Interacts with host DDX3. Interacts (via C-terminus) with host G3BP1; this interaction inhibits the formation of host stress granules on viral mRNAs and the nsp3-G3BP1 complexes bind viral RNAs and probably orchestrate the assembly of viral replication complexes. Interacts (via C-terminus) with host G3BP2; this interaction inhibits the formation of host stress granules on viral mRNAs and the nsp3-G3BP2 complexes bind viral RNAs and probably orchestrate the assembly of viral replication complexes. Interacts with mRNA-capping enzyme nsP1. Interacts with protease nsP2. interacts with itself. In terms of assembly, interacts with RNA-directed RNA polymerase nsP4. Interacts with mRNA-capping enzyme nsP1. Interacts with KPNA1/karyopherin-alpha1; this interaction probably allows the active transport of protease nsP2 into the host nucleus. Mg(2+) serves as cofactor. The cofactor is Mn(2+). Post-translationally, specific enzymatic cleavages in vivo yield mature proteins. The processing of the polyprotein is temporally regulated. In early stages (1.7 hpi), P1234 is first cleaved in trans through its nsP2 protease activity, releasing P123' and nsP4, which associate to form the early replication complex. At the same time, P1234 is also cut at the nsP1/nsP2 site early in infection but with lower efficiency. After replication of the viral minus-strand RNAs (4 hpi), the polyproteins are cut at the nsP1/nsP2 and nsP2/nsP3 sites very efficiently, preventing accumulation of P123' and P1234 and allowing the formation of the late replication complex. NsP3'/nsP4 site is not cleaved anymore and P34 is produced rather than nsP4. Specific enzymatic cleavages in vivo yield mature proteins. The processing of the polyprotein is temporally regulated. In early stages (1.7 hpi), P123 is cleaved at the nsP1/nsP2 site with low efficiency. After replication of the viral minus-strand RNAs (4 hpi), the polyproteins are cut at the nsP1/nsP2 and nsP2/nsP3 sites very efficiently, preventing accumulation of P123 and allowing the formation of the late replication complex. In terms of processing, specific enzymatic cleavages in vivo yield mature proteins. The processing of the polyprotein is temporally regulated. In early stages (1.7 hpi), P123' is cleaved at the nsP1/nsP2 site with low efficiency. After replication of the viral minus-strand RNAs (4 hpi), the polyproteins are cut at the nsP1/nsP2 and nsP2/nsP3 sites very efficiently, preventing accumulation of P123' and allowing the formation of the late replication complex. Post-translationally, palmitoylated by host palmitoyltransferases ZDHHC2 and ZDHHC19. Phosphorylated by host on serines and threonines. In terms of processing, ubiquitinated; targets the protein for rapid degradation via the ubiquitin system. Nsp4 is present in extremely low quantities due to low frequency of translation through the amber stop-codon and the degradation by the ubiquitin pathway.

It localises to the host cytoplasmic vesicle membrane. It is found in the host cell membrane. The protein localises to the host cell projection. The protein resides in the host filopodium. Its subcellular location is the host nucleus. It localises to the host cytoplasm. The enzyme catalyses GTP + S-adenosyl-L-methionine = N(7)-methyl-GTP + S-adenosyl-L-homocysteine. The catalysed reaction is N(7)-methyl-GTP + L-histidyl-[protein] = N(tele)-(N(7)-methylguanosine 5'-phospho)-L-histidyl-[protein] + diphosphate. It carries out the reaction N(tele)-(N(7)-methylguanosine 5'-phospho)-L-histidyl-[protein] + a 5'-end diphospho-(purine-ribonucleoside) in mRNA + H(+) = a 5'-end (N(7)-methyl 5'-triphosphoguanosine)-(purine-ribonucleoside) in mRNA + L-histidyl-[protein]. It catalyses the reaction a 5'-end triphospho-ribonucleoside in mRNA + H2O = a 5'-end diphospho-ribonucleoside in mRNA + phosphate + H(+). The enzyme catalyses a ribonucleoside 5'-triphosphate + H2O = a ribonucleoside 5'-diphosphate + phosphate + H(+). The catalysed reaction is ATP + H2O = ADP + phosphate + H(+). It carries out the reaction RNA(n) + a ribonucleoside 5'-triphosphate = RNA(n+1) + diphosphate. It catalyses the reaction 4-O-(ADP-D-ribosyl)-L-aspartyl-[protein] + H2O = L-aspartyl-[protein] + ADP-D-ribose + H(+). The enzyme catalyses 5-O-(ADP-D-ribosyl)-L-glutamyl-[protein] + H2O = L-glutamyl-[protein] + ADP-D-ribose + H(+). The catalysed reaction is RNA(n) + ATP = RNA(n)-3'-adenine ribonucleotide + diphosphate. It carries out the reaction ADP-alpha-D-ribose 1''-phosphate + H2O = ADP-D-ribose + phosphate. Functionally, inactive precursor of the viral replicase, which is activated by cleavages carried out by the viral protease nsP2. In terms of biological role, the early replication complex formed by the polyprotein P123 and nsP4 synthesizes minus-strand RNAs. As soon P123 is cleaved into mature proteins, the plus-strand RNAs synthesis begins. The early replication complex formed by the polyprotein P123' and nsP4 synthesizes minus-strand RNAs. Polyprotein P123' is a short-lived polyprotein that accumulates during early stage of infection. As soon P123' is cleaved into mature proteins, the plus-strand RNAs synthesis begins. Its function is as follows. Cytoplasmic capping enzyme that catalyzes two virus-specific reactions: methyltransferase and nsP1 guanylyltransferase. mRNA-capping is necessary since all viral RNAs are synthesized in the cytoplasm, and host capping enzymes are restricted to the nucleus. The enzymatic reaction involves a covalent link between 7-methyl-GMP and nsP1, whereas eukaryotic capping enzymes form a covalent complex only with GMP. nsP1 capping consists in the following reactions: GTP is first methylated into 7-methyl-GMP and then is covalently linked to nsP1 to form the m7GMp-nsP1 complex from which 7-methyl-GMP complex is transferred to the mRNA to create the cap structure. NsP1 is also needed for the initiation of the minus-strand RNAs synthesis. Probably serves as a membrane anchor for the replication complex composed of nsP1-nsP4. Palmitoylated nsP1 is remodeling host cell cytoskeleton, and induces filopodium-like structure formation at the surface of the host cell. Functionally, multifunctional protein whose N-terminus is part of the RNA polymerase complex and displays NTPase, RNA triphosphatase and helicase activities. NTPase and RNA triphosphatase are involved in viral RNA capping and helicase keeps a check on the dsRNA replication intermediates. The C-terminus harbors a protease that specifically cleaves the polyproteins and releases the mature proteins. Required for the shutoff of minus-strand RNAs synthesis. Specifically inhibits the host IFN response by promoting the nuclear export of host STAT1. Also inhibits host transcription by inducing the rapid proteasome-dependent degradation of POLR2A, a catalytic subunit of the RNAPII complex. The resulting inhibition of cellular protein synthesis serves to ensure maximal viral gene expression and to evade host immune response. In terms of biological role, seems to be essential for minus-strand RNAs and subgenomic 26S mRNAs synthesis. Displays mono-ADP-ribosylhydrolase activity. ADP-ribosylation is a post-translational modification that controls various processes of the host cell and the virus probably needs to revert it for optimal viral replication. Binds proteins of FXR family and sequesters them into the viral RNA replication complexes thereby inhibiting the formation of host stress granules on viral mRNAs. The nsp3'-FXR complexes bind viral RNAs and probably orchestrate the assembly of viral replication complexes, thanks to the ability of FXR family members to self-assemble and bind DNA. Seems to be essential for minus-strand RNAs and subgenomic 26S mRNAs synthesis. Displays mono-ADP-ribosylhydrolase activity. ADP-ribosylation is a post-translational modification that controls various processes of the host cell and the virus probably needs to revert it for optimal viral replication. Binds proteins of G3BP family and sequesters them into the viral RNA replication complexes thereby inhibiting the formation of host stress granules on viral mRNAs. The nsp3-G3BP complexes bind viral RNAs and probably orchestrate the assembly of viral replication complexes, thanks to the ability of G3BP family members to self-assemble and bind DNA. Its function is as follows. RNA dependent RNA polymerase. Replicates genomic and antigenomic RNA by recognizing replications specific signals. The early replication complex formed by the polyprotein P123 and nsP4 synthesizes minus-strand RNAs. The late replication complex composed of fully processed nsP1-nsP4 is responsible for the production of genomic and subgenomic plus-strand RNAs. In Aedes (Common banded mosquito), this protein is Polyprotein P1234.